The primary structure comprises 102 residues: MNGQNIRIRLKAFDHRILDASTREIVATAKRTGAQVRGPIPLPTRIEKFTVNRSPHIDKKSREQFEMRTHKRLLDIVDPTPQTVDALMKLDLAAGVDVEIKL.

This sequence belongs to the universal ribosomal protein uS10 family. In terms of assembly, part of the 30S ribosomal subunit.

Its function is as follows. Involved in the binding of tRNA to the ribosomes. The polypeptide is Small ribosomal subunit protein uS10 (Xanthobacter autotrophicus (strain ATCC BAA-1158 / Py2)).